Reading from the N-terminus, the 160-residue chain is Sulfur-rich protein (160 aa).

2 helical membrane passes run 63–83 (ITMVVLGIILLIAGLALTFVL) and 92–112 (FLFLIPAVIGLVKLLATSVCM).

It is found in the membrane. The chain is Sulfur-rich protein (srp) from Chlamydophila psittaci (strain ATCC VR-125 / 6BC) (Chlamydia psittaci).